Consider the following 795-residue polypeptide: Nucleolar complex protein 3 homolog (795 aa).

Disordered regions lie at residues 1-88 (MKPM…PLDM), 124-144 (RDDVINKYEKMPRKSKSEPEK), and 168-190 (IPSEEQEENEEEMDTEHTEEVPE). Composition is skewed to basic and acidic residues over residues 22-39 (LKLDNKLKNKQFKQESSA) and 46-58 (QKQLREAVRDVRS). Over residues 74-88 (EEEYEVEEESLPLDM) the composition is skewed to acidic residues. A compositionally biased stretch (acidic residues) spans 171 to 181 (EEQEENEEEMD). Positions 447 to 492 (SYKDKKKNLSRMQRKWKKAEEKLERELLEAEASESKEKKLKLNTET) form a coiled coil.

This sequence belongs to the CBF/MAK21 family.

The protein resides in the nucleus. The protein localises to the nucleolus. This Xenopus laevis (African clawed frog) protein is Nucleolar complex protein 3 homolog (noc3l).